The chain runs to 200 residues: Lipopolysaccharide core heptose(II)-phosphate phosphatase (200 aa).

The first 25 residues, 1–25, serve as a signal peptide directing secretion; it reads MLAFCRSSLKSKKYFIILLALAAIA.

The protein belongs to the phosphoglycerate mutase family. Ais subfamily.

It is found in the periplasm. The protein operates within bacterial outer membrane biogenesis; lipopolysaccharide metabolism. Functionally, catalyzes the dephosphorylation of heptose(II) of the outer membrane lipopolysaccharide core. This is Lipopolysaccharide core heptose(II)-phosphate phosphatase from Escherichia coli O6:H1 (strain CFT073 / ATCC 700928 / UPEC).